A 278-amino-acid polypeptide reads, in one-letter code: Large ribosomal subunit protein uL2 (278 aa).

2 disordered regions span residues 1–53 and 224–278; these read MAIR…TTRH and VVMN…NKKR. Residues 23–33 are compositionally biased toward basic and acidic residues; sequence EITRSTPEKSL. A compositionally biased stretch (polar residues) spans 258-267; sequence RNPNRYSNNM. A compositionally biased stretch (basic residues) spans 269–278; sequence VRRRRPNKKR.

Belongs to the universal ribosomal protein uL2 family. Part of the 50S ribosomal subunit. Forms a bridge to the 30S subunit in the 70S ribosome.

One of the primary rRNA binding proteins. Required for association of the 30S and 50S subunits to form the 70S ribosome, for tRNA binding and peptide bond formation. It has been suggested to have peptidyltransferase activity; this is somewhat controversial. Makes several contacts with the 16S rRNA in the 70S ribosome. The chain is Large ribosomal subunit protein uL2 from Corynebacterium aurimucosum (strain ATCC 700975 / DSM 44827 / CIP 107346 / CN-1) (Corynebacterium nigricans).